The chain runs to 303 residues: D-alanine--D-alanine ligase (303 aa).

The ATP-grasp domain occupies 99–293; sequence TYRFLKGTVE…FEELVEIILK (195 aa). 125–176 contacts ATP; sequence GYPCVVKPRREGSSIGVFVCESDEEFQHALKEDLPRYGSVIVQKYIPGREMT. Mg(2+)-binding residues include Asp-248, Glu-260, and Asn-262.

The protein belongs to the D-alanine--D-alanine ligase family. Mg(2+) is required as a cofactor. Mn(2+) serves as cofactor.

It localises to the cytoplasm. The enzyme catalyses 2 D-alanine + ATP = D-alanyl-D-alanine + ADP + phosphate + H(+). It participates in cell wall biogenesis; peptidoglycan biosynthesis. In terms of biological role, cell wall formation. The sequence is that of D-alanine--D-alanine ligase from Thermotoga maritima (strain ATCC 43589 / DSM 3109 / JCM 10099 / NBRC 100826 / MSB8).